A 144-amino-acid polypeptide reads, in one-letter code: Vasopressin-neurophysin 2-copeptin (144 aa).

Cys1 and Cys6 are disulfide-bonded. Gly9 is subject to Glycine amide. Disulfide bonds link Cys22–Cys66, Cys25–Cys39, Cys33–Cys56, Cys40–Cys46, Cys73–Cys85, Cys79–Cys97, and Cys86–Cys91. Asn112 carries N-linked (GlcNAc...) asparagine glycosylation.

It belongs to the vasopressin/oxytocin family. In terms of assembly, interacts with vasopressin receptors V1bR/AVPR1B (Ki=85 pM), V1aR/AVPR1A (Ki=0.6 nM) and V2R/AVPR2 (Ki=4.9 nM). Interacts with oxytocin receptor (OXTR) (Ki=110 nM).

The protein localises to the secreted. Functionally, neurophysin 2 specifically binds vasopressin. Vasopressin has a direct antidiuretic action on the kidney, it also causes vasoconstriction of the peripheral vessels. Acts by binding to vasopressin receptors (V1bR/AVPR1B, V1aR/AVPR1A, and V2R/AVPR2). The polypeptide is Vasopressin-neurophysin 2-copeptin (AVP) (Cavia porcellus (Guinea pig)).